Reading from the N-terminus, the 915-residue chain is Protein translocase subunit SecA (915 aa).

ATP-binding positions include Q87, 105 to 109, and D512; that span reads GEGKT. The segment at 881–915 is disordered; it reads LPGTAPVRPEPKIGRNEPCPCGSGKKYKHCHGQLN. Residues C899, C901, C910, and H911 each coordinate Zn(2+). The span at 905–915 shows a compositional bias: basic residues; the sequence is KKYKHCHGQLN.

It belongs to the SecA family. Monomer and homodimer. Part of the essential Sec protein translocation apparatus which comprises SecA, SecYEG and auxiliary proteins SecDF-YajC and YidC. The cofactor is Zn(2+).

The protein localises to the cell inner membrane. The protein resides in the cytoplasm. The catalysed reaction is ATP + H2O + cellular proteinSide 1 = ADP + phosphate + cellular proteinSide 2.. In terms of biological role, part of the Sec protein translocase complex. Interacts with the SecYEG preprotein conducting channel. Has a central role in coupling the hydrolysis of ATP to the transfer of proteins into and across the cell membrane, serving both as a receptor for the preprotein-SecB complex and as an ATP-driven molecular motor driving the stepwise translocation of polypeptide chains across the membrane. The chain is Protein translocase subunit SecA from Azotobacter vinelandii (strain DJ / ATCC BAA-1303).